The sequence spans 37 residues: Large ribosomal subunit protein bL36 (37 aa).

Belongs to the bacterial ribosomal protein bL36 family.

The chain is Large ribosomal subunit protein bL36 from Chromobacterium violaceum (strain ATCC 12472 / DSM 30191 / JCM 1249 / CCUG 213 / NBRC 12614 / NCIMB 9131 / NCTC 9757 / MK).